Reading from the N-terminus, the 87-residue chain is UPF0213 protein SYNAS_10430 (87 aa).

The GIY-YIG domain occupies 2–78 (SKNYVYILEC…KKMSRAEKLQ (77 aa)).

It belongs to the UPF0213 family.

This is UPF0213 protein SYNAS_10430 from Syntrophus aciditrophicus (strain SB).